Reading from the N-terminus, the 394-residue chain is Fatty acid resistance protein FarA (394 aa).

The tract at residues 1 to 23 is disordered; that stretch reads MKSGNSEPNLMETHTDETKLQNT. The helical transmembrane segment at 33-53 threads the bilayer; that stretch reads ALTLLFALSAAAAGSAFFLWW. The interval 356-376 is disordered; it reads SAAGAPVSKTPGAALPEMEST.

The protein belongs to the membrane fusion protein (MFP) (TC 8.A.1) family. As to quaternary structure, probably part of a tripartite efflux system FarAB-MtrE, which is composed of an inner membrane transporter, FarB, a periplasmic membrane fusion protein, FarA, and an outer membrane component, MtrE.

The protein localises to the cell inner membrane. Its function is as follows. Mediates resistance to long-chained antibacterial fatty acids (FAs). Function is dependent on the MtrE outer membrane protein. The protein is Fatty acid resistance protein FarA of Neisseria gonorrhoeae.